A 614-amino-acid polypeptide reads, in one-letter code: tRNA uridine 5-carboxymethylaminomethyl modification enzyme MnmG (614 aa).

Residue 10 to 15 (GAGHAG) coordinates FAD. NAD(+) is bound at residue 271 to 285 (GPRYCPSIEDKIVKF).

The protein belongs to the MnmG family. In terms of assembly, homodimer. Heterotetramer of two MnmE and two MnmG subunits. It depends on FAD as a cofactor.

The protein localises to the cytoplasm. In terms of biological role, NAD-binding protein involved in the addition of a carboxymethylaminomethyl (cmnm) group at the wobble position (U34) of certain tRNAs, forming tRNA-cmnm(5)s(2)U34. This is tRNA uridine 5-carboxymethylaminomethyl modification enzyme MnmG from Ureaplasma parvum serovar 3 (strain ATCC 27815 / 27 / NCTC 11736).